The following is a 459-amino-acid chain: Mycothione reductase (459 aa).

31–39 contacts FAD; it reads EQGTFGGTC. Cys39 and Cys44 form a disulfide bridge. Residue His444 is the Proton acceptor of the active site.

The protein belongs to the class-I pyridine nucleotide-disulfide oxidoreductase family. Homodimer. FAD is required as a cofactor.

The enzyme catalyses 2 mycothiol + NADP(+) = mycothione + NADPH + H(+). It catalyses the reaction 2 mycothiol + NAD(+) = mycothione + NADH + H(+). Catalyzes the NAD(P)H-dependent reduction of mycothione (the oxidized disulfide form of mycothiol) to mycothiol. This is Mycothione reductase (mtr) from Mycobacterium tuberculosis (strain CDC 1551 / Oshkosh).